A 98-amino-acid chain; its full sequence is Elicitin Vex1 (98 aa).

3 disulfide bridges follow: cysteine 3/cysteine 71, cysteine 27/cysteine 56, and cysteine 51/cysteine 95. A glycan (N-linked (GlcNAc...) asparagine) is linked at asparagine 92.

It belongs to the elicitin family.

It localises to the secreted. In terms of biological role, induces local and distal defense responses (incompatible hypersensitive reaction) in plants from the solanaceae and cruciferae families. Elicits leaf necrosis and causes the accumulation of pathogenesis-related proteins. Might interact with the lipidic molecules of the plasma membrane. In Phytopythium vexans (Damping-off fungus), this protein is Elicitin Vex1.